A 430-amino-acid polypeptide reads, in one-letter code: MESLKSKKLFAEAKKVIPGGVNSPVRACLSVGCDPLFIERAEGSYIYDADGQKYLDFVNSWGPMIMGHAHPDIIKAIQDAAVYGTSYGAPTSSEVDLASMVVEAVPSIEKVRFVSSGTEATMSAVRLARGYTGKNVIVKFDGCYHGHADSFLVKAGSGVLTLGIPGSPGVPEDIVKNTISIPYNSVEALETTLRDADLNIACVIVEPVAGNMGCVPPAPGFLQKLREITAEEGIVLIFDEVITGFRLSYGGAQQYYGVTPDLTCLGKIIGGGLPVGAYGGKADIMNSVAPDGPVYQAGTLSGNPLAMAAGKAALKLLQQDGFYEDLNQKSAAYADGLLEVAGRVGLPMQLNRVGSVMTSFFTATPVTDFETAMKADTGLYGRHYRQMLDSGIYLAPSQFECSFMSSTHSDADLKRALLETEKSFSLLKNA.

Residue lysine 267 is modified to N6-(pyridoxal phosphate)lysine.

Belongs to the class-III pyridoxal-phosphate-dependent aminotransferase family. HemL subfamily. In terms of assembly, homodimer. Requires pyridoxal 5'-phosphate as cofactor.

It is found in the cytoplasm. The enzyme catalyses (S)-4-amino-5-oxopentanoate = 5-aminolevulinate. Its pathway is porphyrin-containing compound metabolism; protoporphyrin-IX biosynthesis; 5-aminolevulinate from L-glutamyl-tRNA(Glu): step 2/2. This Desulfotalea psychrophila (strain LSv54 / DSM 12343) protein is Glutamate-1-semialdehyde 2,1-aminomutase.